The chain runs to 125 residues: Small ribosomal subunit protein uS12m (125 aa).

The protein belongs to the universal ribosomal protein uS12 family.

It localises to the mitochondrion. Functionally, protein S12 is involved in the translation initiation step. In Brassica napus (Rape), this protein is Small ribosomal subunit protein uS12m (RPS12).